An 880-amino-acid polypeptide reads, in one-letter code: Tyrosine-protein kinase receptor TYRO3 (880 aa).

Positions 1–30 (MALRRSMGWPGLRPLLLAGLASLLLPGSAA) are cleaved as a signal peptide. Ig-like C2-type domains follow at residues 31–118 (AGLK…TKIS) and 129–209 (PFFT…PAIV). The Extracellular portion of the chain corresponds to 31-419 (AGLKLMGAPV…QGPPHSRTSW (389 aa)). N-linked (GlcNAc...) asparagine glycans are attached at residues Asn-53, Asn-75, Asn-181, Asn-220, Asn-230, Asn-283, Asn-356, and Asn-370. 2 disulfides stabilise this stretch: Cys-54/Cys-107 and Cys-150/Cys-193. Fibronectin type-III domains follow at residues 217–310 (APFN…TKGL) and 315–406 (APQN…SHDH). The helical transmembrane segment at 420-440 (VPVVLGVLTALITAAALALIL) threads the bilayer. Topologically, residues 441–880 (LRKRRKETRF…QQGLLPHSSC (440 aa)) are cytoplasmic. At Ser-456 the chain carries Phosphoserine. Residues 508–785 (FTLGRMLGKG…LENILGHLSV (278 aa)) form the Protein kinase domain. ATP-binding positions include 514 to 522 (LGKGEFGSV) and Lys-540. Asp-645 serves as the catalytic Proton acceptor. Phosphotyrosine; by autocatalysis is present on residues Tyr-671, Tyr-675, Tyr-676, and Tyr-794. Residues 800–864 (AEQPTESGSP…QQPESPLNEN (65 aa)) are disordered. Ser-808 and Ser-859 each carry phosphoserine. Positions 849–864 (SPGQLEQQPESPLNEN) are enriched in polar residues.

Belongs to the protein kinase superfamily. Tyr protein kinase family. AXL/UFO subfamily. Monomer and homodimer. Interacts (via N-terminus) with extracellular ligands TULP1 and GAS6. Interacts with PIK3R1; this interaction increases PI3-kinase activity. In terms of processing, autophosphorylated. Abundant in the brain and lower levels in other tissues.

It is found in the cell membrane. It catalyses the reaction L-tyrosyl-[protein] + ATP = O-phospho-L-tyrosyl-[protein] + ADP + H(+). In terms of biological role, receptor tyrosine kinase that transduces signals from the extracellular matrix into the cytoplasm by binding to several ligands including TULP1 or GAS6. Regulates many physiological processes including cell survival, migration and differentiation. Ligand binding at the cell surface induces dimerization and autophosphorylation of TYRO3 on its intracellular domain that provides docking sites for downstream signaling molecules. Following activation by ligand, interacts with PIK3R1 and thereby enhances PI3-kinase activity. Activates the AKT survival pathway, including nuclear translocation of NF-kappa-B and up-regulation of transcription of NF-kappa-B-regulated genes. TYRO3 signaling plays a role in various processes such as neuron protection from excitotoxic injury, platelet aggregation and cytoskeleton reorganization. Also plays an important role in inhibition of Toll-like receptors (TLRs)-mediated innate immune response by activating STAT1, which selectively induces production of suppressors of cytokine signaling SOCS1 and SOCS3. The protein is Tyrosine-protein kinase receptor TYRO3 (Tyro3) of Mus musculus (Mouse).